A 111-amino-acid polypeptide reads, in one-letter code: MISDKIKLTAKDILEKEFKTGMRGYQQEEVDKFLDMIIKDYEVFHKELEQLQQQNARLKRELEEQKLAAAQAPQQTIPTPAAQPVYSNTNTDILKRLSNLEKAVFGSKLYE.

The stretch at 34–72 forms a coiled coil; that stretch reads LDMIIKDYEVFHKELEQLQQQNARLKRELEEQKLAAAQA.

This sequence belongs to the GpsB family. Forms polymers through the coiled coil domains. Interacts with PBP1, MreC and EzrA.

The protein localises to the cytoplasm. In terms of biological role, divisome component that associates with the complex late in its assembly, after the Z-ring is formed, and is dependent on DivIC and PBP2B for its recruitment to the divisome. Together with EzrA, is a key component of the system that regulates PBP1 localization during cell cycle progression. Its main role could be the removal of PBP1 from the cell pole after pole maturation is completed. Also contributes to the recruitment of PBP1 to the division complex. Not essential for septum formation. This is Cell cycle protein GpsB from Bacillus cytotoxicus (strain DSM 22905 / CIP 110041 / 391-98 / NVH 391-98).